Here is a 60-residue protein sequence, read N- to C-terminus: Cytotoxin 6 (60 aa).

4 disulfide bridges follow: C3–C21, C14–C38, C42–C53, and C54–C59.

It belongs to the three-finger toxin family. Short-chain subfamily. Type IA cytotoxin sub-subfamily. In terms of assembly, monomer in solution; Homodimer and oligomer in the presence of negatively charged lipids forming a pore with a size ranging between 20 and 30 Angstroms. Expressed by the venom gland.

Its subcellular location is the secreted. It is found in the target cell membrane. In terms of biological role, shows cytolytic activity on many different cells by forming pore in lipid membranes. In vivo, increases heart rate or kills the animal by cardiac arrest. In addition, it binds to heparin with high affinity, interacts with Kv channel-interacting protein 1 (KCNIP1) in a calcium-independent manner, and binds to integrin alpha-V/beta-3 (ITGAV/ITGB3) with moderate affinity. The sequence is that of Cytotoxin 6 from Naja annulifera (Banded Egyptian cobra).